The sequence spans 402 residues: Propionate kinase (402 aa).

2 residues coordinate ATP: asparagine 11 and lysine 18. Residue asparagine 11 coordinates Mg(2+). Arginine 86 lines the substrate pocket. The active-site Proton donor/acceptor is the aspartate 143. ATP contacts are provided by residues histidine 175, 203 to 207 (HLGNG), 278 to 280 (DLR), and 326 to 330 (GIGEN).

The protein belongs to the acetokinase family. TdcD subfamily. In terms of assembly, homodimer. Requires Mg(2+) as cofactor.

The catalysed reaction is propanoate + ATP = propanoyl phosphate + ADP. It participates in amino-acid degradation; L-threonine degradation via propanoate pathway; propanoate from L-threonine: step 4/4. Catalyzes the conversion of propionyl phosphate and ADP to propionate and ATP. The polypeptide is Propionate kinase (Enterobacter sp. (strain 638)).